An 845-amino-acid chain; its full sequence is Cadherin-related family member 5 (845 aa).

The first 25 residues, 1-25 (MGSWALLWPPLLFTGLLVRPPGTMA), serve as a signal peptide directing secretion. The Extracellular portion of the chain corresponds to 26–669 (QAQYCSVNKD…DKRFSVVDMA (644 aa)). N-linked (GlcNAc...) asparagine glycosylation is found at Asn-44, Asn-81, Asn-140, Asn-198, Asn-297, Asn-308, and Asn-405. Cadherin domains lie at 71–124 (FRIQ…APEF), 125–237 (PFKT…PPWF), 249–354 (IQAQ…PPRF), and 355–459 (PQRL…PPST). The disordered stretch occupies residues 452 to 661 (SEQEPPSTDV…SSGGGPSEDK (210 aa)). The segment covering 506–518 (SGTTLRPPTSSTP) has biased composition (low complexity). Asn-526 is a glycosylation site (N-linked (GlcNAc...) asparagine). 3 stretches are compositionally biased toward polar residues: residues 539–549 (TAQTPKPGTSQ), 556–594 (GTSTSHQPATPSGGTAQTPEPGTSQPMPPSMGTSTSHQP), and 602–611 (AQTPEAGTSQ). A run of 3 repeats spans residues 540-570 (AQTPKPGTSQPMPPGVGTSTSHQPATPSGGT), 571-601 (AQTPEPGTSQPMPPSMGTSTSHQPATPGGGT), and 602-631 (AQTPEAGTSQPMPPGMGTSTSHQPTTPGGG). The segment at 540–645 (AQTPKPGTSQ…PEPGTSQPMP (106 aa)) is 4 X 31 AA approximate tandem repeats. The 4; truncated repeat unit spans residues 632–645 (TAQTPEPGTSQPMP). Residues 633 to 652 (AQTPEPGTSQPMPLSKSTPS) are compositionally biased toward low complexity. Residues 670–690 (ALGGVLGALLLLALLGLAVLV) traverse the membrane as a helical segment. The Cytoplasmic segment spans residues 691–845 (HKHYGPRLKC…DAPGGDDSYI (155 aa)). The tract at residues 691–845 (HKHYGPRLKC…DAPGGDDSYI (155 aa)) is mediates interaction with USH1C and MYO7B and is required for proper localization to microvilli tips and function in microvilli organization. The disordered stretch occupies residues 724-789 (ANWAPVPSPT…KERRPEGGYK (66 aa)). The segment covering 729–762 (VPSPTHDPKPAEAPMPAEPAPPGPASPGGAPEPP) has biased composition (pro residues). Ser-770 is modified (phosphoserine). Thr-810 is subject to Phosphothreonine. Positions 811–845 (LDVDGASDSGSGDEGEGAGRGGGPYDAPGGDDSYI) are disordered. 3 positions are modified to phosphoserine: Ser-817, Ser-819, and Ser-821. A compositionally biased stretch (low complexity) spans 835–845 (YDAPGGDDSYI).

As to quaternary structure, part of the IMAC/intermicrovillar adhesion complex/intermicrovillar tip-link complex composed of ANKS4B, MYO7B, USH1C, CDHR2 and CDHR5. Interacts (via cytoplasmic domain) with USH1C and MYO7B; required for proper localization of CDHR5 to microvilli tips and its function in brush border differentiation. Post-translationally, N- and O-glycosylated. As to expression, highest expression in kidney, liver, colon and small intestine. In kidney, expressed apically along brush border of proximal convoluted tubule but not in cortical collecting ducts. Isoform 1 is expressed primarily in adult small intestine and colon. Isoform 2 is highly expressed in fetal liver. Expressed in duodenum with higher expression in enterocytes along the villus axis and lower expression in crypts (at protein level).

Its subcellular location is the apical cell membrane. It is found in the cell projection. The protein localises to the microvillus membrane. Intermicrovillar adhesion molecule that forms, via its extracellular domain, calcium-dependent heterophilic complexes with CDHR2 on adjacent microvilli. Thereby, controls the packing of microvilli at the apical membrane of epithelial cells. Through its cytoplasmic domain, interacts with microvillus cytoplasmic proteins to form the intermicrovillar adhesion complex/IMAC. This complex plays a central role in microvilli and epithelial brush border differentiation. In Homo sapiens (Human), this protein is Cadherin-related family member 5.